We begin with the raw amino-acid sequence, 420 residues long: Dynein axonemal assembly factor 4 (420 aa).

Positions 3–87 (LQVSDYSWQQ…KEAAMWETLS (85 aa)) constitute a CS domain. Residues 7-103 (DYSWQQTKTA…ETMQRIREKS (97 aa)) are mediates interaction with ESR1 and STUB1. TPR repeat units lie at residues 290–323 (PEWL…NNKM), 324–357 (PLLY…LMPP), and 366–399 (MKAH…DPSN).

Interacts with ZMYND10. Interacts with STUB1. Interacts with ESR1 and ESR2. Interacts with DNAAF2. Interacts with CCT3, CCT4, CCT5 and CCT8. Interacts with DNAAF6/PIH1D3.

It localises to the nucleus. It is found in the cytoplasm. The protein resides in the cell projection. Its subcellular location is the neuron projection. The protein localises to the dynein axonemal particle. In terms of biological role, involved in neuronal migration during development of the cerebral neocortex. May regulate the stability and proteasomal degradation of the estrogen receptors that play an important role in neuronal differentiation, survival and plasticity. Axonemal dynein assembly factor required for ciliary motility. The chain is Dynein axonemal assembly factor 4 from Pongo pygmaeus (Bornean orangutan).